A 269-amino-acid chain; its full sequence is Interleukin-1 beta (269 aa).

A propeptide spans 1-116 (MAEVPELASE…TWDNEAYVHD (116 aa)) (removed in mature form; by CASP1). Residues 228–241 (FESAQFPNWYISTS) carry the Involved in interaction with TMED10 C-terminus motif.

This sequence belongs to the IL-1 family. In terms of assembly, monomer. In its precursor form, weakly interacts with full-length MEFV; the mature cytokine does not interact at all. Interacts with integrins ITGAV:ITGBV and ITGA5:ITGB1; integrin-binding is required for IL1B signaling. Interacts with cargo receptor TMED10; the interaction is direct and is required for the secretion of IL1B mature form. Interacts with HSP90AB1; the interaction facilitates cargo translocation into the ERGIC. Interacts with HSP90B1; the interaction facilitates cargo translocation into the ERGIC. Activation of the IL1B precursor involves a CASP1-catalyzed proteolytic cleavage. Processing and secretion are temporarily associated. In terms of processing, (Microbial infection) Cleavage by S.pyogenes cysteine protease SpeB promotes its activation independently of CASP1. Expressed in activated monocytes/macrophages (at protein level).

The protein localises to the cytoplasm. The protein resides in the cytosol. It localises to the secreted. Its subcellular location is the lysosome. It is found in the extracellular exosome. Its activity is regulated as follows. (Microbial infection) Cleavage by S.pyogenes cysteine protease SpeB promotes its activation independently of CASP1. SpeB-mediated maturation of IL1B plays a dual role depending on infection site: while IL1B inflammatory response prevents bacterial growth during invasive skin infections, it promotes streptococcal infection of the nasopharynx by disrupting colonization resistance mediated by the microbiota. Functionally, potent pro-inflammatory cytokine. Initially discovered as the major endogenous pyrogen, induces prostaglandin synthesis, neutrophil influx and activation, T-cell activation and cytokine production, B-cell activation and antibody production, and fibroblast proliferation and collagen production. Promotes Th17 differentiation of T-cells. Synergizes with IL12/interleukin-12 to induce IFNG synthesis from T-helper 1 (Th1) cells. Plays a role in angiogenesis by inducing VEGF production synergistically with TNF and IL6. Involved in transduction of inflammation downstream of pyroptosis: its mature form is specifically released in the extracellular milieu by passing through the gasdermin-D (GSDMD) pore. Acts as a sensor of S.pyogenes infection in skin: cleaved and activated by pyogenes SpeB protease, leading to an inflammatory response that prevents bacterial growth during invasive skin infection. In Homo sapiens (Human), this protein is Interleukin-1 beta.